The chain runs to 69 residues: FMRFamide-like neuropeptides 24 (69 aa).

A signal peptide spans 1–25 (MLSSRTSSIILILAILVAIMAVAQC). A propeptide spanning residues 26–51 (RNIQYDVEEMTPEAAFRYAQWGEIPH) is cleaved from the precursor. Phe64 carries the phenylalanine amide modification. Residues 68–69 (SI) constitute a propeptide that is removed on maturation.

It belongs to the FARP (FMRFamide related peptide) family.

The protein resides in the secreted. In terms of biological role, probable FMRFamide-like neuropeptides. Plays a role in behaviors associated with a sleep-like state induced by stress (SIS), acting in concert with the FMRFamide related peptide flp-13 and neuropeptide-like protein nlp-8. This is FMRFamide-like neuropeptides 24 from Caenorhabditis elegans.